The sequence spans 592 residues: AT-rich interactive domain-containing protein 5A (592 aa).

Residues 1-53 (MAPPVKGKRKQSEEGEPLDPPVSPQPDGEPRSRSPVRLEEPPEAGREREEEQE) are disordered. The segment at 1–299 (MAPPVKGKRK…AAPPLESPQS (299 aa)) is interaction with SOX9. A Phosphoserine modification is found at serine 23. Over residues 28 to 49 (GEPRSRSPVRLEEPPEAGRERE) the composition is skewed to basic and acidic residues. The 93-residue stretch at 52–144 (QEEEQAFLVS…LVLPYVRHLK (93 aa)) folds into the ARID domain. Residues lysine 82 and lysine 91 each participate in a glycyl lysine isopeptide (Lys-Gly) (interchain with G-Cter in ubiquitin) cross-link. The disordered stretch occupies residues 143–225 (LKGEDDKPLP…RGPAAGPSLP (83 aa)). Residues 162–186 (MAKEPRGDDGATERPKKVKEEKRVD) are compositionally biased toward basic and acidic residues. The residue at position 253 (serine 253) is a Phosphoserine. Residues 277–333 (CRHGAGGEPQAPPAAPPLESPQSPGGPAEDSRHRLTPLEGRQAPGGGLWGETQAGPR) are disordered. Over residues 286–295 (QAPPAAPPLE) the composition is skewed to pro residues. 2 positions are modified to phosphoserine: serine 438 and serine 463.

In terms of assembly, interacts with SOX9. Interacts with ESR1. Interacts with RORC. Post-translationally, phosphorylated by MAPK14 on serine residues involving a TLR4 signaling pathway upon lipopolysaccharide (LPS) stimulation leading to its ubiquitination and proteasomal degradation. Ubiquitinated leading to proteasomal degradation; involving WWP1 linked to MAPK14-mediated phosphorylation upon LPS stimulation.

Its subcellular location is the nucleus. Its function is as follows. DNA-binding protein that may regulate transcription and act as a repressor by binding to AT-rich stretches in the promoter region of target genes. May act as repressor and down-regulate enhancer-dependent gene expressison. May positively regulate chondrocyte-specific transcription such as of COL2A1 in collaboration with SOX9 and positively regulate histone H3 acetylation at chondrocyte-specific genes. May stimulate early-stage chondrocyte differentiation and inhibit later stage differention. Can repress ESR1-mediated transcriptional activation; proposed to act as corepressor for selective nuclear hormone receptors. As an RNA-binding protein, involved in the regulation of inflammatory response by stabilizing selective inflammation-related mRNAs, such as STAT3 and TBX21. Also stabilizes IL6 mRNA. Binds to stem loop structures located in the 3'UTRs of IL6, STAT3 and TBX21 mRNAs; at least for STAT3 prevents binding of ZC3H12A to the mRNA stem loop structure thus inhibiting its degradation activity. Contributes to elevated IL6 levels possibly implicated in autoimmunity processes. IL6-dependent stabilization of STAT3 mRNA may promote differentiation of naive CD4+ T-cells into T-helper Th17 cells. In CD4+ T-cells may also inhibit RORC-induced Th17 cell differentiation independently of IL6 signaling. Stabilization of TBX21 mRNA contributes to elevated interferon-gamma secretion in Th1 cells possibly implicated in the establishment of septic shock. Stabilizes TNFRSF4/OX40 mRNA by binding to the conserved stem loop structure in its 3'UTR; thereby competing with the mRNA-destabilizing functions of RC3H1 and endoribonuclease ZC3H12A. The chain is AT-rich interactive domain-containing protein 5A (ARID5A) from Bos taurus (Bovine).